Here is a 144-residue protein sequence, read N- to C-terminus: Putative protein PHLOEM PROTEIN 2-LIKE B4 (144 aa).

The polypeptide is Putative protein PHLOEM PROTEIN 2-LIKE B4 (PP2B4) (Arabidopsis thaliana (Mouse-ear cress)).